Reading from the N-terminus, the 1493-residue chain is Inactive serine/threonine-protein kinase TEX14 (1493 aa).

3 ANK repeats span residues 27–54, 55–84, and 88–117; these read LHEY…AVNS, LGQT…DPNH, and DGST…DLRL. The Protein kinase domain occupies 198–511; that stretch reads VISAQNIYSF…IMKNDLKDFI (314 aa). Residues 204–212 and K266 contribute to the ATP site; that span reads IYSFGFGKF. Position 430 is a phosphoserine; by PLK1 (S430). Over residues 559–573 the composition is skewed to polar residues; sequence GSQFHSPRGHSSPTG. The interval 559 to 615 is disordered; sequence GSQFHSPRGHSSPTGKATPEPPVPDVSPVAQQTHRQDAASPACSVAEEARNPSPDQT. S560 and S660 each carry phosphoserine. 2 disordered regions span residues 782 to 904 and 940 to 1081; these read HDSP…RISM and AATG…LTPD. The GPPX3Y motif lies at 789–795; it reads GPPASSY. The short motif at 846 to 854 is the D-box element; it reads KASLERDRN. Polar residues-rich tracts occupy residues 855–904 and 1001–1020; these read QNTS…RISM and CGQT…QRFT. Positions 1026 to 1037 are enriched in basic and acidic residues; sequence PPREDEQPEHSE. Polar residues predominate over residues 1053–1064; sequence YSGQSAQSTCSP. Residues 1066-1075 show a composition bias toward acidic residues; that stretch reads SSEDTEDMTD. At S1100 the chain carries Phosphoserine. The disordered stretch occupies residues 1115-1167; sequence RPQASGEEKFQMRKNLGKNSEILTKSQFQPIRSPEGEQDETLKEPPKEVKEKD. Positions 1131–1144 are enriched in polar residues; the sequence is GKNSEILTKSQFQP. Residues 1154 to 1167 are compositionally biased toward basic and acidic residues; that stretch reads ETLKEPPKEVKEKD. Position 1262 is a phosphoserine (S1262). Disordered stretches follow at residues 1288-1307 and 1341-1466; these read GAGS…ATQR and KGQQ…EEEE. The span at 1343–1362 shows a compositional bias: polar residues; it reads QQVSSTALDENTASRPGSTE. Residues 1363–1380 are compositionally biased toward basic and acidic residues; it reads NDQRHLEEQETHSNKEDS. At S1400 the chain carries Phosphoserine. Positions 1426-1456 are enriched in basic and acidic residues; it reads PAREASSKDQEVGEKKRKGEESTKPEKRKPE. Residue S1492 is modified to Phosphoserine.

It belongs to the protein kinase superfamily. In terms of assembly, interacts with KIF23 and RBM44. Interacts with CEP55; inhibiting interaction between CEP55 and PDCD6IP/ALIX and TSG101. Post-translationally, phosphorylated on Thr residues by CDK1 during early phases of mitosis, promoting the interaction with PLK1 and recruitment to kinetochores. Phosphorylated on Ser-430 by PLK1 during late prometaphase promotes the rapid depletion from kinetochores and its subsequent degradation by the APC/C complex.

It localises to the cytoplasm. Its subcellular location is the midbody. The protein resides in the chromosome. It is found in the centromere. The protein localises to the kinetochore. Its function is as follows. Required both for the formation of intercellular bridges during meiosis and for kinetochore-microtubule attachment during mitosis. Intercellular bridges are evolutionarily conserved structures that connect differentiating germ cells and are required for spermatogenesis and male fertility. Acts by promoting the conversion of midbodies into intercellular bridges via its interaction with CEP55: interaction with CEP55 inhibits the interaction between CEP55 and PDCD6IP/ALIX and TSG101, blocking cell abscission and leading to transform midbodies into intercellular bridges. Also plays a role during mitosis: recruited to kinetochores by PLK1 during early mitosis and regulates the maturation of the outer kinetochores and microtubule attachment. Has no protein kinase activity in vitro. The sequence is that of Inactive serine/threonine-protein kinase TEX14 (TEX14) from Bos taurus (Bovine).